Consider the following 1058-residue polypeptide: Zinc finger protein 865 (1058 aa).

3 disordered regions span residues 1-24 (MEAN…EDGV), 58-134 (LPCT…PPLF), and 156-201 (GNLK…ACDP). Positions 8–21 (SGAGGGGSSGIGGE) are enriched in gly residues. Residues 61–78 (TPGPPPQPPPQPPPPQYD) show a composition bias toward pro residues. Over residues 93–113 (SSSSSSSSSSSSSSSSSSSSS) the composition is skewed to low complexity. The span at 120–133 (PPLPPTFGAPPPPL) shows a compositional bias: pro residues. Residues 172–187 (GLGTPTGTPGPLTTPS) show a composition bias toward low complexity. 2 C2H2-type zinc fingers span residues 220-242 (FPCG…MLVH) and 248-270 (YECG…RRCH). Positions 269–342 (CHKDVPPTPT…PPGVAMPPSA (74 aa)) are disordered. The segment covering 294-324 (PVSTASATASSDPAAVSSGPSATPATPATST) has biased composition (low complexity). C2H2-type zinc fingers lie at residues 350-372 (FACS…QIIH), 378-400 (FSCS…VKTH), 407-429 (LPCG…QAAH), 439-461 (YPCD…KAAH), 546-568 (FCCG…ERIH), 574-596 (HQCP…HVVH), 602-624 (YKCE…RQVH), 664-686 (YACS…KEAH), and 692-714 (YGCD…KLVH). Residues 459–486 (AAHAPPVATEPAKDGAASVPQPPPPFPP) are disordered. The tract at residues 721-743 (LLAPTPSGPQSSDGGSSGGGTDA) is disordered. 9 C2H2-type zinc fingers span residues 791–813 (FSCA…KYVH), 819–841 (LGCG…RRSH), 847–869 (FRCP…QRCH), 875–897 (YRCG…RVVH), 903–925 (FKCG…RRLH), 931–953 (QRCG…QRLH), 959–981 (YRCE…QRAH), 988–1010 (LRCP…LAAH), and 1016–1038 (FRCS…RLMH). Residue Lys-801 forms a Glycyl lysine isopeptide (Lys-Gly) (interchain with G-Cter in SUMO2) linkage. Residue Lys-1039 forms a Glycyl lysine isopeptide (Lys-Gly) (interchain with G-Cter in SUMO2) linkage.

The protein belongs to the krueppel C2H2-type zinc-finger protein family.

It is found in the nucleus. Functionally, may be involved in transcriptional regulation. The chain is Zinc finger protein 865 (Znf865) from Mus musculus (Mouse).